We begin with the raw amino-acid sequence, 250 residues long: Triosephosphate isomerase (250 aa).

9-11 (NWK) contributes to the substrate binding site. The Electrophile role is filled by H95. E167 (proton acceptor) is an active-site residue. Residues G173, S212, and 233–234 (GG) each bind substrate.

It belongs to the triosephosphate isomerase family. As to quaternary structure, homodimer.

Its subcellular location is the cytoplasm. The enzyme catalyses D-glyceraldehyde 3-phosphate = dihydroxyacetone phosphate. Its pathway is carbohydrate biosynthesis; gluconeogenesis. It participates in carbohydrate degradation; glycolysis; D-glyceraldehyde 3-phosphate from glycerone phosphate: step 1/1. Functionally, involved in the gluconeogenesis. Catalyzes stereospecifically the conversion of dihydroxyacetone phosphate (DHAP) to D-glyceraldehyde-3-phosphate (G3P). This Endomicrobium trichonymphae protein is Triosephosphate isomerase.